A 420-amino-acid chain; its full sequence is UDP-N-acetylglucosamine 1-carboxyvinyltransferase (420 aa).

Residue 22–23 (KN) participates in phosphoenolpyruvate binding. Position 93 (R93) interacts with UDP-N-acetyl-alpha-D-glucosamine. Residue C117 is the Proton donor of the active site. The residue at position 117 (C117) is a 2-(S-cysteinyl)pyruvic acid O-phosphothioketal. D306 and I328 together coordinate UDP-N-acetyl-alpha-D-glucosamine.

Belongs to the EPSP synthase family. MurA subfamily.

The protein resides in the cytoplasm. The enzyme catalyses phosphoenolpyruvate + UDP-N-acetyl-alpha-D-glucosamine = UDP-N-acetyl-3-O-(1-carboxyvinyl)-alpha-D-glucosamine + phosphate. The protein operates within cell wall biogenesis; peptidoglycan biosynthesis. Its function is as follows. Cell wall formation. Adds enolpyruvyl to UDP-N-acetylglucosamine. The sequence is that of UDP-N-acetylglucosamine 1-carboxyvinyltransferase from Colwellia psychrerythraea (strain 34H / ATCC BAA-681) (Vibrio psychroerythus).